A 270-amino-acid chain; its full sequence is Phosphatidate cytidylyltransferase (270 aa).

8 consecutive transmembrane segments (helical) span residues F17–I37, F55–P75, I81–F101, V104–I124, G129–F149, E170–V190, L193–I213, and I248–V268.

This sequence belongs to the CDS family.

The protein resides in the cell membrane. It catalyses the reaction a 1,2-diacyl-sn-glycero-3-phosphate + CTP + H(+) = a CDP-1,2-diacyl-sn-glycerol + diphosphate. It participates in phospholipid metabolism; CDP-diacylglycerol biosynthesis; CDP-diacylglycerol from sn-glycerol 3-phosphate: step 3/3. This is Phosphatidate cytidylyltransferase (cdsA) from Thermotoga maritima (strain ATCC 43589 / DSM 3109 / JCM 10099 / NBRC 100826 / MSB8).